The sequence spans 425 residues: Enolase 2 (425 aa).

Glutamine 163 lines the (2R)-2-phosphoglycerate pocket. The active-site Proton donor is glutamate 205. Aspartate 242, glutamate 285, and aspartate 312 together coordinate Mg(2+). 4 residues coordinate (2R)-2-phosphoglycerate: lysine 337, arginine 366, serine 367, and lysine 388. Catalysis depends on lysine 337, which acts as the Proton acceptor.

It belongs to the enolase family. It depends on Mg(2+) as a cofactor.

The protein localises to the cytoplasm. Its subcellular location is the secreted. It is found in the cell surface. The catalysed reaction is (2R)-2-phosphoglycerate = phosphoenolpyruvate + H2O. The protein operates within carbohydrate degradation; glycolysis; pyruvate from D-glyceraldehyde 3-phosphate: step 4/5. Catalyzes the reversible conversion of 2-phosphoglycerate (2-PG) into phosphoenolpyruvate (PEP). It is essential for the degradation of carbohydrates via glycolysis. The chain is Enolase 2 from Cupriavidus metallidurans (strain ATCC 43123 / DSM 2839 / NBRC 102507 / CH34) (Ralstonia metallidurans).